Consider the following 72-residue polypeptide: DNA-directed RNA polymerase subunit Rpo10 (72 aa).

Cys-7, Cys-10, Cys-53, and Cys-54 together coordinate Zn(2+).

It belongs to the archaeal Rpo10/eukaryotic RPB10 RNA polymerase subunit family. Part of the RNA polymerase complex. Requires Zn(2+) as cofactor.

Its subcellular location is the cytoplasm. The enzyme catalyses RNA(n) + a ribonucleoside 5'-triphosphate = RNA(n+1) + diphosphate. In terms of biological role, DNA-dependent RNA polymerase (RNAP) catalyzes the transcription of DNA into RNA using the four ribonucleoside triphosphates as substrates. The protein is DNA-directed RNA polymerase subunit Rpo10 of Thermoplasma volcanium (strain ATCC 51530 / DSM 4299 / JCM 9571 / NBRC 15438 / GSS1).